A 140-amino-acid polypeptide reads, in one-letter code: ATP synthase epsilon chain (140 aa).

The protein belongs to the ATPase epsilon chain family. As to quaternary structure, F-type ATPases have 2 components, CF(1) - the catalytic core - and CF(0) - the membrane proton channel. CF(1) has five subunits: alpha(3), beta(3), gamma(1), delta(1), epsilon(1). CF(0) has three main subunits: a, b and c.

The protein resides in the cell inner membrane. In terms of biological role, produces ATP from ADP in the presence of a proton gradient across the membrane. In Thermodesulfovibrio yellowstonii (strain ATCC 51303 / DSM 11347 / YP87), this protein is ATP synthase epsilon chain.